The sequence spans 200 residues: Dephospho-CoA kinase (200 aa).

In terms of domain architecture, DPCK spans 3–200 (RIGLTGGIGS…LIAEILTRIK (198 aa)). 11–16 (GSGKST) is an ATP binding site.

This sequence belongs to the CoaE family.

Its subcellular location is the cytoplasm. The catalysed reaction is 3'-dephospho-CoA + ATP = ADP + CoA + H(+). Its pathway is cofactor biosynthesis; coenzyme A biosynthesis; CoA from (R)-pantothenate: step 5/5. Its function is as follows. Catalyzes the phosphorylation of the 3'-hydroxyl group of dephosphocoenzyme A to form coenzyme A. This is Dephospho-CoA kinase from Corynebacterium efficiens (strain DSM 44549 / YS-314 / AJ 12310 / JCM 11189 / NBRC 100395).